The sequence spans 749 residues: Cytosolic phospholipase A2 (749 aa).

The interval 1-178 (MSFIDPYQHI…MKKLLGPKNS (178 aa)) is phospholipid binding. Phosphoserine is present on Ser-2. The region spanning 6–122 (PYQHIIVEHQ…KVGEKKEVPF (117 aa)) is the C2 domain. The Ca(2+) site is built by Asp-40, Thr-41, Asp-43, Asn-65, Asp-93, Ala-94, and Asn-95. Positions 140–740 (SCPDLRFSMA…SNVEARRFFN (601 aa)) constitute a PLA2c domain. Residue Ser-228 is the Nucleophile of the active site. Thr-268 is subject to Phosphothreonine. Residues 409 to 457 (GSQSRGSTMEEELENITTKHIVSNDSSDSDDESHEPKGTENEDAGSDYQ) form a disordered region. Phosphoserine is present on residues Ser-434, Ser-435, and Ser-437. A Phosphoserine; by MAPK modification is found at Ser-505. Residue Ser-515 is modified to Phosphoserine. Residue Lys-541 forms a Glycyl lysine isopeptide (Lys-Gly) (interchain with G-Cter in SUMO2) linkage. Catalysis depends on Asp-549, which acts as the Proton acceptor. Lys-606 is covalently cross-linked (Glycyl lysine isopeptide (Lys-Gly) (interchain with G-Cter in SUMO2)). Ser-727 and Ser-729 each carry phosphoserine.

Interacts with KAT5. Post-translationally, phosphorylated at both Ser-505 and Ser-727 in response to mitogenic stimuli.

The protein localises to the cytoplasm. The protein resides in the golgi apparatus membrane. Its subcellular location is the nucleus envelope. It carries out the reaction a 1,2-diacyl-sn-glycero-3-phosphocholine + H2O = a 1-acyl-sn-glycero-3-phosphocholine + a fatty acid + H(+). The enzyme catalyses a 1-O-alkyl-2-acyl-sn-glycero-3-phosphocholine + H2O = a 1-O-alkyl-sn-glycero-3-phosphocholine + a fatty acid + H(+). The catalysed reaction is a 1-acyl-sn-glycero-3-phosphocholine + H2O = sn-glycerol 3-phosphocholine + a fatty acid + H(+). It catalyses the reaction 1-hexadecanoyl-2-(5Z,8Z,11Z,14Z-eicosatetraenoyl)-sn-glycero-3-phosphocholine + H2O = 1-hexadecanoyl-sn-glycero-3-phosphocholine + (5Z,8Z,11Z,14Z)-eicosatetraenoate + H(+). It carries out the reaction 1,2-di-(5Z,8Z,11Z,14Z-eicosatetraenoyl)-sn-glycero-3-phosphocholine + H2O = 1-(5Z,8Z,11Z,14Z-eicosatetraenoyl)-sn-glycero-3-phosphocholine + (5Z,8Z,11Z,14Z)-eicosatetraenoate + H(+). The enzyme catalyses 1-octadecanoyl-2-(5Z,8Z,11Z,14Z-eicosatetraenoyl)-sn-glycero-3-phosphocholine + H2O = 1-octadecanoyl-sn-glycero-3-phosphocholine + (5Z,8Z,11Z,14Z)-eicosatetraenoate + H(+). The catalysed reaction is 1-hexadecanoyl-2-(9Z,12Z-octadecadienoyl)-sn-glycero-3-phosphocholine + H2O = (9Z,12Z)-octadecadienoate + 1-hexadecanoyl-sn-glycero-3-phosphocholine + H(+). It catalyses the reaction 1-octadecanoyl-2-(9Z,12Z,15Z-octadecatrienoyl)-sn-glycero-3-phosphocholine + H2O = (9Z,12Z,15Z)-octadecatrienoate + 1-octadecanoyl-sn-glycero-3-phosphocholine + H(+). It carries out the reaction 1-(5Z,8Z,11Z,14Z-eicosatetraenoyl)-2-hexadecanoyl-sn-glycero-3-phosphocholine + H2O = 1-(5Z,8Z,11Z,14Z-eicosatetraenoyl)-sn-glycero-3-phosphocholine + hexadecanoate + H(+). The enzyme catalyses 1-O-hexadecyl-2-(5Z,8Z,11Z,14Z)-eicosatetraenoyl-sn-glycero-3-phosphocholine + H2O = 1-O-hexadecyl-sn-glycero-3-phosphocholine + (5Z,8Z,11Z,14Z)-eicosatetraenoate + H(+). The catalysed reaction is 1,2-di-(9Z-octadecenoyl)-sn-glycero-3-phospho-(1'-sn-glycerol) + H2O = 1-(9Z-octadecenoyl)-sn-glycero-3-phospho-(1'-sn-glycerol) + (9Z)-octadecenoate + H(+). It catalyses the reaction 1-octadecanoyl-2-(5Z,8Z,11Z,14Z-eicosatetraenoyl)-sn-glycero-3-phosphate + H2O = 1-octadecanoyl-sn-glycero-3-phosphate + (5Z,8Z,11Z,14Z)-eicosatetraenoate + H(+). It carries out the reaction 1-hexadecanoyl-sn-glycero-3-phosphocholine + H2O = sn-glycerol 3-phosphocholine + hexadecanoate + H(+). The enzyme catalyses 2-(prostaglandin E2)-sn-glycero-3-phosphoethanolamine + H2O = sn-glycero-3-phosphoethanolamine + prostaglandin E2 + H(+). The catalysed reaction is 2-[(15S)-hydroxy-(5Z,8Z,11Z,13E)-eicosatetraenoyl]-sn-glycero-3-phosphocholine + H2O = (15S)-hydroxy-(5Z,8Z,11Z,13E)-eicosatetraenoate + sn-glycerol 3-phosphocholine + H(+). It catalyses the reaction 2-[(15R)-hydroxy-(5Z,8Z,11Z,13E)-eicosatetraenoyl]-sn-glycero-3-phosphocholine + H2O = (15R)-hydroxy-(5Z,8Z,11Z,13E)-eicosatetraenoate + sn-glycerol 3-phosphocholine + H(+). It carries out the reaction 2-(prostaglandin E2)-sn-glycero-3-phosphocholine + H2O = prostaglandin E2 + sn-glycerol 3-phosphocholine + H(+). The enzyme catalyses 2-[(11R)-hydroxy-(5Z,8Z,12E,14Z)-eicosatetraenoyl]-sn-glycero-3-phosphocholine + H2O = (11R)-hydroxy-(5Z,8Z,12E,14Z)-eicosatetraenoate + sn-glycerol 3-phosphocholine + H(+). The catalysed reaction is 1-(5Z,8Z,11Z,14Z-eicosatetraenoyl)-2-O-hexadecyl-sn-glycero-3-phosphocholine + H2O = 2-O-hexadecyl-sn-glycero-3-phosphocholine + (5Z,8Z,11Z,14Z)-eicosatetraenoate + H(+). It catalyses the reaction 1-octadecanoyl-2-(5Z,8Z,11Z,14Z-eicosatetraenoyl)-sn-glycero-3-phosphocholine + glycerol = 1-(5Z,8Z,11Z,14Z-eicosatetraenoyl)-glycerol + 1-octadecanoyl-sn-glycero-3-phosphocholine. It carries out the reaction 1-octadecanoyl-2-(9Z,12Z,15Z-octadecatrienoyl)-sn-glycero-3-phosphocholine + glycerol = 1-(9Z,12Z,15Z-octadecatrienoyl)-glycerol + 1-octadecanoyl-sn-glycero-3-phosphocholine. The protein operates within membrane lipid metabolism; glycerophospholipid metabolism. It participates in lipid metabolism; arachidonate metabolism. Its pathway is lipid metabolism; prostaglandin biosynthesis. It functions in the pathway lipid metabolism; leukotriene B4 biosynthesis. Its activity is regulated as follows. Activated by cytosolic calcium, which is necessary for binding to membrane lipids. Activated by phosphorylation in response to mitogenic stimuli. In terms of biological role, has primarily calcium-dependent phospholipase and lysophospholipase activities, with a major role in membrane lipid remodeling and biosynthesis of lipid mediators of the inflammatory response. Plays an important role in embryo implantation and parturition through its ability to trigger prostanoid production. Preferentially hydrolyzes the ester bond of the fatty acyl group attached at sn-2 position of phospholipids (phospholipase A2 activity). Selectively hydrolyzes sn-2 arachidonoyl group from membrane phospholipids, providing the precursor for eicosanoid biosynthesis via the cyclooxygenase pathway. In an alternative pathway of eicosanoid biosynthesis, hydrolyzes sn-2 fatty acyl chain of eicosanoid lysophopholipids to release free bioactive eicosanoids. Hydrolyzes the ester bond of the fatty acyl group attached at sn-1 position of phospholipids (phospholipase A1 activity) only if an ether linkage rather than an ester linkage is present at the sn-2 position. This hydrolysis is not stereospecific. Has calcium-independent phospholipase A2 and lysophospholipase activities in the presence of phosphoinositides. Has O-acyltransferase activity. Catalyzes the transfer of fatty acyl chains from phospholipids to a primary hydroxyl group of glycerol (sn-1 or sn-3), potentially contributing to monoacylglycerol synthesis. This is Cytosolic phospholipase A2 (PLA2G4A) from Pongo abelii (Sumatran orangutan).